Reading from the N-terminus, the 417-residue chain is Gamma-glutamyl phosphate reductase (417 aa).

The protein belongs to the gamma-glutamyl phosphate reductase family.

The protein localises to the cytoplasm. The catalysed reaction is L-glutamate 5-semialdehyde + phosphate + NADP(+) = L-glutamyl 5-phosphate + NADPH + H(+). It participates in amino-acid biosynthesis; L-proline biosynthesis; L-glutamate 5-semialdehyde from L-glutamate: step 2/2. Its function is as follows. Catalyzes the NADPH-dependent reduction of L-glutamate 5-phosphate into L-glutamate 5-semialdehyde and phosphate. The product spontaneously undergoes cyclization to form 1-pyrroline-5-carboxylate. The chain is Gamma-glutamyl phosphate reductase from Escherichia coli O17:K52:H18 (strain UMN026 / ExPEC).